The sequence spans 548 residues: Dihydroxy-acid dehydratase (548 aa).

Residue D78 coordinates Mg(2+). C119 provides a ligand contact to [2Fe-2S] cluster. The Mg(2+) site is built by D120 and K121. At K121 the chain carries N6-carboxylysine. C185 lines the [2Fe-2S] cluster pocket. A Mg(2+)-binding site is contributed by E438. Residue S464 is the Proton acceptor of the active site.

This sequence belongs to the IlvD/Edd family. Homodimer. The cofactor is [2Fe-2S] cluster. Requires Mg(2+) as cofactor.

It catalyses the reaction (2R)-2,3-dihydroxy-3-methylbutanoate = 3-methyl-2-oxobutanoate + H2O. The enzyme catalyses (2R,3R)-2,3-dihydroxy-3-methylpentanoate = (S)-3-methyl-2-oxopentanoate + H2O. It functions in the pathway amino-acid biosynthesis; L-isoleucine biosynthesis; L-isoleucine from 2-oxobutanoate: step 3/4. Its pathway is amino-acid biosynthesis; L-valine biosynthesis; L-valine from pyruvate: step 3/4. Its function is as follows. Functions in the biosynthesis of branched-chain amino acids. Catalyzes the dehydration of (2R,3R)-2,3-dihydroxy-3-methylpentanoate (2,3-dihydroxy-3-methylvalerate) into 2-oxo-3-methylpentanoate (2-oxo-3-methylvalerate) and of (2R)-2,3-dihydroxy-3-methylbutanoate (2,3-dihydroxyisovalerate) into 2-oxo-3-methylbutanoate (2-oxoisovalerate), the penultimate precursor to L-isoleucine and L-valine, respectively. The chain is Dihydroxy-acid dehydratase from Methanothrix thermoacetophila (strain DSM 6194 / JCM 14653 / NBRC 101360 / PT) (Methanosaeta thermophila).